The following is a 278-amino-acid chain: Octanoyl-[GcvH]:protein N-octanoyltransferase (278 aa).

Positions 41–247 (LVSPPTIRTW…LLHRLAGEVH (207 aa)) constitute a BPL/LPL catalytic domain. Residue C146 is the Acyl-thioester intermediate of the active site.

It belongs to the octanoyltransferase LipL family.

It catalyses the reaction N(6)-octanoyl-L-lysyl-[glycine-cleavage complex H protein] + L-lysyl-[lipoyl-carrier protein] = N(6)-octanoyl-L-lysyl-[lipoyl-carrier protein] + L-lysyl-[glycine-cleavage complex H protein]. The protein operates within protein modification; protein lipoylation via endogenous pathway; protein N(6)-(lipoyl)lysine from octanoyl-[acyl-carrier-protein]. Its function is as follows. Catalyzes the amidotransfer (transamidation) of the octanoyl moiety from octanoyl-GcvH to the lipoyl domain of the E2 subunit of lipoate-dependent enzymes. In Lysinibacillus sphaericus (strain C3-41), this protein is Octanoyl-[GcvH]:protein N-octanoyltransferase.